We begin with the raw amino-acid sequence, 303 residues long: Acetylglutamate kinase (303 aa).

Residues 69–70 (GG), Arg91, and Asn190 each bind substrate.

Belongs to the acetylglutamate kinase family. ArgB subfamily.

Its subcellular location is the cytoplasm. The enzyme catalyses N-acetyl-L-glutamate + ATP = N-acetyl-L-glutamyl 5-phosphate + ADP. It participates in amino-acid biosynthesis; L-arginine biosynthesis; N(2)-acetyl-L-ornithine from L-glutamate: step 2/4. In terms of biological role, catalyzes the ATP-dependent phosphorylation of N-acetyl-L-glutamate. The chain is Acetylglutamate kinase from Nocardia farcinica (strain IFM 10152).